The primary structure comprises 158 residues: NAD(P)H-quinone oxidoreductase subunit J, chloroplastic (158 aa).

It belongs to the complex I 30 kDa subunit family. As to quaternary structure, NDH is composed of at least 16 different subunits, 5 of which are encoded in the nucleus.

The protein resides in the plastid. It localises to the chloroplast thylakoid membrane. The enzyme catalyses a plastoquinone + NADH + (n+1) H(+)(in) = a plastoquinol + NAD(+) + n H(+)(out). It carries out the reaction a plastoquinone + NADPH + (n+1) H(+)(in) = a plastoquinol + NADP(+) + n H(+)(out). In terms of biological role, NDH shuttles electrons from NAD(P)H:plastoquinone, via FMN and iron-sulfur (Fe-S) centers, to quinones in the photosynthetic chain and possibly in a chloroplast respiratory chain. The immediate electron acceptor for the enzyme in this species is believed to be plastoquinone. Couples the redox reaction to proton translocation, and thus conserves the redox energy in a proton gradient. This chain is NAD(P)H-quinone oxidoreductase subunit J, chloroplastic, found in Acorus calamus var. americanus (American sweet flag).